We begin with the raw amino-acid sequence, 256 residues long: Sugar fermentation stimulation protein homolog (256 aa).

Over residues 128-141 the composition is skewed to low complexity; that stretch reads TGSTDTSFSGTPPT. The disordered stretch occupies residues 128–149; sequence TGSTDTSFSGTPPTNTEPANTK.

The protein belongs to the SfsA family.

The polypeptide is Sugar fermentation stimulation protein homolog (Shewanella sediminis (strain HAW-EB3)).